The chain runs to 344 residues: Ketol-acid reductoisomerase (NADP(+)) (344 aa).

Positions 1-181 constitute a KARI N-terminal Rossmann domain; it reads MATMYYEQNI…GAARGGLLET (181 aa). NADP(+)-binding positions include 25-28, R48, S52, and 82-85; these read YGSQ and DERQ. Residue H107 is part of the active site. Residue G133 participates in NADP(+) binding. The KARI C-terminal knotted domain maps to 182-327; that stretch reads TFKEETETDL…AKLREMMPFI (146 aa). Mg(2+)-binding residues include D190, E194, E226, and E230. Position 251 (S251) interacts with substrate.

Belongs to the ketol-acid reductoisomerase family. Mg(2+) serves as cofactor.

The enzyme catalyses (2R)-2,3-dihydroxy-3-methylbutanoate + NADP(+) = (2S)-2-acetolactate + NADPH + H(+). It carries out the reaction (2R,3R)-2,3-dihydroxy-3-methylpentanoate + NADP(+) = (S)-2-ethyl-2-hydroxy-3-oxobutanoate + NADPH + H(+). It functions in the pathway amino-acid biosynthesis; L-isoleucine biosynthesis; L-isoleucine from 2-oxobutanoate: step 2/4. Its pathway is amino-acid biosynthesis; L-valine biosynthesis; L-valine from pyruvate: step 2/4. In terms of biological role, involved in the biosynthesis of branched-chain amino acids (BCAA). Catalyzes an alkyl-migration followed by a ketol-acid reduction of (S)-2-acetolactate (S2AL) to yield (R)-2,3-dihydroxy-isovalerate. In the isomerase reaction, S2AL is rearranged via a Mg-dependent methyl migration to produce 3-hydroxy-3-methyl-2-ketobutyrate (HMKB). In the reductase reaction, this 2-ketoacid undergoes a metal-dependent reduction by NADPH to yield (R)-2,3-dihydroxy-isovalerate. The protein is Ketol-acid reductoisomerase (NADP(+)) of Lysinibacillus sphaericus (strain C3-41).